Reading from the N-terminus, the 126-residue chain is Small ribosomal subunit protein uS12 (126 aa).

Position 89 is a 3-methylthioaspartic acid (Asp89). The tract at residues 106–126 is disordered; that stretch reads GVRERRRSRSKYGAKMPRSAA.

The protein belongs to the universal ribosomal protein uS12 family. As to quaternary structure, part of the 30S ribosomal subunit. Contacts proteins S8 and S17. May interact with IF1 in the 30S initiation complex.

Functionally, with S4 and S5 plays an important role in translational accuracy. Interacts with and stabilizes bases of the 16S rRNA that are involved in tRNA selection in the A site and with the mRNA backbone. Located at the interface of the 30S and 50S subunits, it traverses the body of the 30S subunit contacting proteins on the other side and probably holding the rRNA structure together. The combined cluster of proteins S8, S12 and S17 appears to hold together the shoulder and platform of the 30S subunit. This chain is Small ribosomal subunit protein uS12, found in Tremblaya princeps.